A 326-amino-acid polypeptide reads, in one-letter code: Glutaminase 2 (326 aa).

Positions 73, 125, 169, 176, 200, 252, and 270 each coordinate substrate.

The protein belongs to the glutaminase family. Homotetramer.

The catalysed reaction is L-glutamine + H2O = L-glutamate + NH4(+). The protein is Glutaminase 2 of Bacillus cereus (strain ATCC 14579 / DSM 31 / CCUG 7414 / JCM 2152 / NBRC 15305 / NCIMB 9373 / NCTC 2599 / NRRL B-3711).